The primary structure comprises 360 residues: Histidinol-phosphate aminotransferase (360 aa).

Residue lysine 218 is modified to N6-(pyridoxal phosphate)lysine.

This sequence belongs to the class-II pyridoxal-phosphate-dependent aminotransferase family. Histidinol-phosphate aminotransferase subfamily. In terms of assembly, homodimer. Pyridoxal 5'-phosphate is required as a cofactor.

It carries out the reaction L-histidinol phosphate + 2-oxoglutarate = 3-(imidazol-4-yl)-2-oxopropyl phosphate + L-glutamate. The protein operates within amino-acid biosynthesis; L-histidine biosynthesis; L-histidine from 5-phospho-alpha-D-ribose 1-diphosphate: step 7/9. This is Histidinol-phosphate aminotransferase from Pelagibacter ubique (strain HTCC1062).